The sequence spans 445 residues: Methionine aminopeptidase 2-1 (445 aa).

The segment at 1–86 (MAAQASEDLQ…VQSEPPRVPL (86 aa)) is disordered. Residues 34–46 (GEAEDDSDDDADE) show a composition bias toward acidic residues. Basic residues predominate over residues 59–74 (AKKKKKRKSKKKKKGG). Position 198 (H198) interacts with substrate. A divalent metal cation-binding residues include D218, D229, and H298. H306 serves as a coordination point for substrate. Positions 331 and 426 each coordinate a divalent metal cation.

It belongs to the peptidase M24A family. Methionine aminopeptidase eukaryotic type 2 subfamily. Co(2+) serves as cofactor. Zn(2+) is required as a cofactor. The cofactor is Mn(2+). It depends on Fe(2+) as a cofactor.

It is found in the cytoplasm. The enzyme catalyses Release of N-terminal amino acids, preferentially methionine, from peptides and arylamides.. Cotranslationally removes the N-terminal methionine from nascent proteins. The N-terminal methionine is often cleaved when the second residue in the primary sequence is small and uncharged (Met-Ala-, Cys, Gly, Pro, Ser, Thr, or Val). The protein is Methionine aminopeptidase 2-1 of Aspergillus flavus (strain ATCC 200026 / FGSC A1120 / IAM 13836 / NRRL 3357 / JCM 12722 / SRRC 167).